The sequence spans 269 residues: Putative imidazole glycerol phosphate synthase subunit hisF2 (269 aa).

Residue D133 is part of the active site.

Belongs to the HisA/HisF family. In terms of assembly, heterodimer of HisH and HisF.

Its subcellular location is the cytoplasm. The enzyme catalyses 5-[(5-phospho-1-deoxy-D-ribulos-1-ylimino)methylamino]-1-(5-phospho-beta-D-ribosyl)imidazole-4-carboxamide + L-glutamine = D-erythro-1-(imidazol-4-yl)glycerol 3-phosphate + 5-amino-1-(5-phospho-beta-D-ribosyl)imidazole-4-carboxamide + L-glutamate + H(+). The protein operates within amino-acid biosynthesis; L-histidine biosynthesis; L-histidine from 5-phospho-alpha-D-ribose 1-diphosphate: step 5/9. In terms of biological role, IGPS catalyzes the conversion of PRFAR and glutamine to IGP, AICAR and glutamate. The HisF subunit catalyzes the cyclization activity that produces IGP and AICAR from PRFAR using the ammonia provided by the HisH subunit. This is Putative imidazole glycerol phosphate synthase subunit hisF2 (hisF2) from Parasynechococcus marenigrum (strain WH8102).